The following is a 364-amino-acid chain: DNA replication and repair protein RecF (364 aa).

30–37 (GRNAQGKT) is a binding site for ATP.

Belongs to the RecF family.

The protein localises to the cytoplasm. The RecF protein is involved in DNA metabolism; it is required for DNA replication and normal SOS inducibility. RecF binds preferentially to single-stranded, linear DNA. It also seems to bind ATP. This Pelotomaculum thermopropionicum (strain DSM 13744 / JCM 10971 / SI) protein is DNA replication and repair protein RecF.